A 216-amino-acid polypeptide reads, in one-letter code: uncharacterized protein (216 aa).

The protein resides in the plastid. Its subcellular location is the chloroplast. This is an uncharacterized protein from Pyropia yezoensis (Susabi-nori).